Consider the following 417-residue polypeptide: NADH-quinone oxidoreductase subunit D (417 aa).

The protein belongs to the complex I 49 kDa subunit family. NDH-1 is composed of 14 different subunits. Subunits NuoB, C, D, E, F, and G constitute the peripheral sector of the complex.

It is found in the cell inner membrane. It catalyses the reaction a quinone + NADH + 5 H(+)(in) = a quinol + NAD(+) + 4 H(+)(out). Its function is as follows. NDH-1 shuttles electrons from NADH, via FMN and iron-sulfur (Fe-S) centers, to quinones in the respiratory chain. The immediate electron acceptor for the enzyme in this species is believed to be ubiquinone. Couples the redox reaction to proton translocation (for every two electrons transferred, four hydrogen ions are translocated across the cytoplasmic membrane), and thus conserves the redox energy in a proton gradient. This is NADH-quinone oxidoreductase subunit D from Dechloromonas aromatica (strain RCB).